The sequence spans 576 residues: MRFRYRKWRRPRRLFRSRRRRGYARRRWRRRAWGRRRRVRRYRRRRGGTKRQYISSIMQWNPQHRHLCYIKGITWLCAARADRMSWPGIKQIAATDSTRYWSTILVGGCGVLTLSMDWFFFENLRWRNRWSHSNVGYDLARYMGTHLYFPPLADIWYIVWTDTEFVDQPKKVMSYTHPWILLMTKKHKVIKPRKWNGKGKKIFLKPPAVFNSAWYTSDKWCGAGLGRIYFSFLNPFKQIMHTNQTEQSFPFAIELGNTDYDKPPNNSYDFKDTNEVKKVWNTAGKKYYYRADWDTGDGNAIMLPNTLSPTTPASWLLLEWDAPYWLWFWGKTYQDFVSSHTPEGNPYYGQIYVKWWPITNPYDQGPHTYPEDKEWCLMMLDPQPNFMTCNSIAAALKIAAFGPCVYAPQDTQTSQIPINIPMYYLSKWQWGGSTQGTSTHIDNPCNPRPKSIQIADPATAPRDVIHPWDVDASGTISTAKLKQLMEGLGYREPKPKPGPPETLIPPGAPTPELDYYSSETESDDFDTGDSEEEEEDHQDPRWVRESLDKLTRRLRGERRQRQQLGKGLLALLKEKK.

A disordered region spans residues Gly-489–Lys-576. The span at Lys-496–Pro-509 shows a compositional bias: pro residues. Acidic residues predominate over residues Thr-520–His-537. A compositionally biased stretch (basic and acidic residues) spans Gln-538 to Thr-551. The segment covering Gln-562–Lys-576 has biased composition (low complexity).

It belongs to the anelloviridae capsid protein family.

It localises to the virion. Its function is as follows. Self-assembles to form an icosahedral capsid with a T=1 symmetry, about 30 nm in diameter, and consisting of 60 capsid proteins. The capsid encapsulates the genomic DNA. Capsid protein is involved in attachment and entry into the host cell. This is Capsid protein from Torque teno canis virus (isolate Cf-TTV10).